We begin with the raw amino-acid sequence, 211 residues long: ATP phosphoribosyltransferase (211 aa).

This sequence belongs to the ATP phosphoribosyltransferase family. Short subfamily. Heteromultimer composed of HisG and HisZ subunits.

It localises to the cytoplasm. It carries out the reaction 1-(5-phospho-beta-D-ribosyl)-ATP + diphosphate = 5-phospho-alpha-D-ribose 1-diphosphate + ATP. It functions in the pathway amino-acid biosynthesis; L-histidine biosynthesis; L-histidine from 5-phospho-alpha-D-ribose 1-diphosphate: step 1/9. Catalyzes the condensation of ATP and 5-phosphoribose 1-diphosphate to form N'-(5'-phosphoribosyl)-ATP (PR-ATP). Has a crucial role in the pathway because the rate of histidine biosynthesis seems to be controlled primarily by regulation of HisG enzymatic activity. In Pseudomonas fluorescens (strain ATCC BAA-477 / NRRL B-23932 / Pf-5), this protein is ATP phosphoribosyltransferase.